The chain runs to 200 residues: Putative HTH-type transcriptional regulator YhjB (200 aa).

The region spanning 135–200 (DIKDLKSLSA…QAAMMLNISS (66 aa)) is the HTH luxR-type domain. A DNA-binding region (H-T-H motif) is located at residues 159–178 (NKEIGRALNISTGTVKAHLE).

The protein is Putative HTH-type transcriptional regulator YhjB (yhjB) of Escherichia coli (strain K12).